Consider the following 86-residue polypeptide: Small ribosomal subunit protein uS17 (86 aa).

This sequence belongs to the universal ribosomal protein uS17 family. In terms of assembly, part of the 30S ribosomal subunit.

One of the primary rRNA binding proteins, it binds specifically to the 5'-end of 16S ribosomal RNA. The sequence is that of Small ribosomal subunit protein uS17 from Dehalococcoides mccartyi (strain ATCC BAA-2266 / KCTC 15142 / 195) (Dehalococcoides ethenogenes (strain 195)).